Reading from the N-terminus, the 3122-residue chain is MNKNRYRVVFNRARGALMVVQENGRASHGSGSRDARAGVVPAWLSLSPFALRHVALAVLVAAGVVPIWVNAQVVAGGAHAPSVIQTQNGLQQVNINRPGASGVSMNTYNQFDVPKPGIILNNSPINVQTQLGGIIGGNPNFQAGDAARLIVNQVNSNNPSFIRGKVEIGGAAAQLVIANQAGLVVDGGGFLNTSRATLTTGNPNFGPDGSLTGFNVNQGLISVVGAGLDTANVDQVDLLARAVQINAKAYAKTLNVVAGSNQVDYNTLNATPIAANGPAPTIAIDVSQLGGMYANRVFLVSSENGVGVANAGDIAAQAGDLTLQANGRLVLSGHTNAAGNMSLSASGGIQNSGVTYGKQSVTITTGADLTNSGALTAQQNLTANVGSLNSTGTLGAGINVDSTVGTSGDLNVTSSGQLTATGTNSAAGNATFTGSGVNLSNSATAANGNLALTATAGDVNLAGSTVSAKGAVNAQASGTVVNDRGNLSSGAGMTLGGGSLSNQGGRANSQGPLSVQMAGTVSNQNGMLSSQSTADVRGSAIQNNAGLIQSAGKQTIAGASIDNSAGRLISLNADGLSVTATGALTNAAGANVSGDPGGVIGGKGDVTVQGNTVTNSGSMSADATLHVIGQSVDNGNGALHAGQTTTVDAGNHLSNAGGRVEGQSAVLNGATLDNSQGTVNAATVSLNGTTLLNHGGTVTQTGTGPMTVAITDTLDNSNNGLIQTRSTDLSLTSTTLINDNGGTITHVGPGTLTVGNGSGTVSNKAGAIASNGRTVLQGKTIDNSAGSASGQTGLSVNAADSITNLGGKLTSNANVDVTAGGALVNDGGELGSKTAATTIHSASLSNLNGKIVSPTLTATVAGLLDNSQNGDFEANQLALTAANLKNQGGHISQWQSGPTTLAVSGTLDNSNGGVIQTNSTDLTLAPAVLDNSKGTITHGGTGTLTLTPGNGAGALQNTGGTIGTNGQAIVKAGSLDNGSGVIAAKLGLSATIAGAMNNTQGLMRSNAALSIISNGALSNHQGHIEAGTPGDTSTLSIQAASIDNTDGAVHDFGTGKMTVQGGSQIVNSHAGGVDGMGQMTGQGDVTIGAASISNTQGGQLMGANLLIQGATLDNSGGQVGNVANATGDVNVAMSGAVTNTNGSITSTRDLSVAASTLLGGGAYSAARDAAINLQGDFTTTPQTQFNIGRDLTFTLPGTFANSANLQSVHNLTVNAGNIVNTGAMTAGSLLSTHSGDLTNYGAMVGGSVAIQASGTVSNLGPVALIGASDTSGLLEIVAHDIENRDDTTLGDSMPTTTIFGLGKVALAGGKDANGNYTNAALINNSSAAIQSGASMELHADKVTNTRRVMQTSGNTSQVDPALLQQLGISMSGCAAYYIAACSGQDVHWINLFHDPNYPDYDPAPIIAALKLQPGGVFTVPPNGGQWNSGYQYTTYEGKATANTVTKLSPGAQIASGGDLDASTVKTFQNYWSSVTAAGNIKQPASLDMDGWGATGQQAPGVTVVYSGYYHYNNYDNSEHNWTLPFGDKPFVGGPGGYTQAAPADVRQYSLPDYRSTWGANGTISGNGVSVNNTAANATIPSLGLLPGQAVPGLTIGTVSGNASGTQSGAAAIKGGTPTWVDPVIASATAVNVLSNLTIPQGGLYRPNSAPNPTYLIETNPAFTRMNNFLSSDYYLNQIGVNPLTTEKRLGDGFYEQQLVRNQVTQLTGKAVLGPYTDLQGMYQSLMLAGAEWSKSLNLPLGMSLSAQQVAALTTNVIIMQTETVGGQQVLVPVVYLAKADQQNANGPLITAGNIDLKNTQVFTNSGTVKADTTLALQGKQIDNAFGALQSGGLTSLDTTGNVDLTSANVKAGSLDLNAGNKLILDTATQTTHQVSRDGATSDKTTLGPAANLNVAGDASIKTGGDFQQNAGNLNVGGNLNANIGGNWNLGVQQTGEHKVVQRANGVSDTDLNSATGSTVNVGGKSAIGVGGDLTAQGARLDFGQGGTVAAKGNVTFGAASTTSTINANSSGDQGNRSYAETRHGSDQALTGTTVKGGDTLNVVSGKDINVIGSTIDLKKGDANLLAAGDVNVGAVTERHVYNSRETHSRSGVVSGTKIASSQDATSTVANGSLISADGVSIGSGKDINVQGSTVVGTHDVALNAAHDVNITTSQDTSQSSTTYQEQHSGLMSGGGLSFSVGNSKLAQQNQSSSVTNNASTVGSVDGNLTVNAGNTLHVKGSDLVAGKDVTGTAANIVVDSATDTTRQAQQQQTSKSGLTVGLSGSVGDAINNAISETQAARESAKDSNGRASALHSIAAAGDVAFGGLGAKALLDGAKGPQAPSIGVQVSVGSSHSSMQSSEDQTIQRGSSINAGGNAKLIATGNGTPKDGNITIAGSNVNAANVALIANNQVNLVNTTDTDKTQSSNSSSGSSVGVSIGTNGIGVSASMQRAHGDGNSDAAIQNNTHINASQTATIVSGGDTNVIGANVNANKVVADVGGNLNVASVQDTTVSAAHQSSAGGGFTISQTGGGASFSAQNGHADGNYAGVNEQAGIQAGSGGFDVTVKGNTDLKGAYIASTADASKNSLTTGTLTTSDIENHSHYSANSAGFSAGASVGVSTKAVGPSSVSGSGGVTPMVFQNDSGDQSATTKSAVSAGAINITKPGEQTQDVANLNRDATNLNGTVSKTPDVQKMLSQQADTMNAAQAAGQTVSQGIGLYADGKRKDAIDAAKAAYERGDLVAMQSYIDQAKSWDEGGASRAGLQATGGALIGGLGGGSVLTAIGGAAGAGTSSLLAGQAEKISKSVGDMTGSSLVGNIAANVAATVGGALVGGSAGAAMASNVELYNAGNDPQKTDDRATIAGLQGLLNQAVAAGAKGLSTIANARNAIGNAISGALDSAADQFGTLMKRDAEGKMSQSPAELVSQGVANGINTVLGSKGGEPPLAGPSAVAVDSLTGQAANAALGATDRTPPSNAILSNSNSDNNSTQGSQSGTVTKTPNPEATGSLSGKPTQIPPLSDEVTTRSLIRENQSAVTLANKGYDVVQNPEVLGPKNPDYTINGQVFDNYAPATGNVRNIATTISNKVSSGQASNIVVNLADSSASPAAIEAQINSYPIPGLGKVIVIDKLGNITIIKPKGN.

A two-partner system transport domain (TPS) region spans residues 36 to 205 (RAGVVPAWLS…ATLTTGNPNF (170 aa)). The helical transmembrane segment at 54–74 (VALAVLVAAGVVPIWVNAQVV) threads the bilayer. The segment at 256–1254 (VVAGSNQVDY…GGSVAIQASG (999 aa)) is FHA-1. Positions 492-512 (GMTLGGGSLSNQGGRANSQGP) are disordered. The span at 500–512 (LSNQGGRANSQGP) shows a compositional bias: polar residues. Residues 1345–1635 (TRRVMQTSGN…SATAVNVLSN (291 aa)) form a receptor binding domain (RBD) region. A periplasmic FHA-1 repeat (pFR) region spans residues 1790-1845 (TAGNIDLKNTQVFTNSGTVKADTTLALQGKQIDNAFGALQSGGLTSLDTTGNVDLT). Residues 1947–2085 (SDTDLNSATG…TERHVYNSRE (139 aa)) form an FHA-2 region. Disordered regions lie at residues 2002-2031 (TSTI…ALTG), 2151-2174 (TTSQ…MSGG), and 2325-2352 (IGVQ…GSSI). The pretoxin (PT) domain stretch occupies residues 2086–2825 (THSRSGVVSG…SAGAAMASNV (740 aa)). Composition is skewed to low complexity over residues 2151 to 2170 (TTSQ…HSGL) and 2325 to 2341 (IGVQ…MQSS). The span at 2342 to 2352 (EDQTIQRGSSI) shows a compositional bias: polar residues. The tract at residues 2821-3122 (MASNVELYNA…NITIIKPKGN (302 aa)) is C-terminal effector domain (CT), has tRNA nuclease activity. An ELYN C-terminal motif motif is present at residues 2826 to 2829 (ELYN). The interval 2948–3000 (GATDRTPPSNAILSNSNSDNNSTQGSQSGTVTKTPNPEATGSLSGKPTQIPPL) is disordered. Positions 2948–3122 (GATDRTPPSN…NITIIKPKGN (175 aa)) are truncated CT domain, has tRNA nuclease activity, sufficient for interaction with CdiI-2. The span at 2953-2994 (TPPSNAILSNSNSDNNSTQGSQSGTVTKTPNPEATGSLSGKP) shows a compositional bias: polar residues. The has tRNase activity stretch occupies residues 2987–3122 (TGSLSGKPTQ…NITIIKPKGN (136 aa)). Active-site residues include Glu-3012, Asp-3039, Asp-3048, and Lys-3067.

It in the N-terminal section; belongs to the CdiA toxin family. As to quaternary structure, interacts with cognate immunity protein CdiI, which blocks its tRNA nuclease activity. The truncated CT fragment (residues 2948-3122) specifically interacts with cognate CdiI which inhibits the tRNA nuclease activity. The truncated CT is more stable in vitro than the original CT fragment characterized in E.coli.

The protein resides in the membrane. Its subcellular location is the secreted. It is found in the target cell. It localises to the target cell cytoplasm. Its function is as follows. Toxic component of a toxin-immunity protein module, which functions as a cellular contact-dependent growth inhibition (CDI) system. CDI modules allow bacteria to communicate with and inhibit the growth of closely related neighboring bacteria in a contact-dependent fashion. The C-terminal 301 residues (the CT fragment) cleaves near the C-terminus of E.coli tRNA1B(Ala), probably preventing tRNA charging, and inhibits growth in E.coli. A truncated CT fragment (residues 2948-3122) has tRNA endonuclease activity on several B.thailandensis tRNAs as well as tRNA2(Arg) where it cleaves after A-70 and U-71. Inactive CT domain binds tRNA, probably in a 1:1 complex. Toxic activity is neutralized by coexpression of the cognate immunity protein CdiI in E.coli, but not by non-cognate immunity proteins from other strains of B.pseudomallei. May use lipopolysaccharide as its target cell receptor. Probably gains access to the cytoplasm of target cells (B.thailandensis strain E264) by using integral inner membrane protein BTH_II0599. Protein BTH_I0359 is also implicated in an unknown fashion in CDI in B.thailandensis strain E264. In terms of biological role, expression of this cdiAIB locus in B.thailandensis confers protection against other bacteria carrying the locus; growth inhibition requires cellular contact. The CdiA protein is thought to be exported from the cell through the central lumen of CdiB, the other half of its two-partner system (TPS). The TPS domain probably remains associated with CdiB while the FHA-1 domain forms an extended filament with the receptor-binding domain (RBD) at its extremity; in the secretion arrested state the C-terminus of the RBD domain form a hairpin-like structure as the FHA-2, PT and CT domains are periplasmic. Upon binding to a target cell outer membrane receptor (possibly a lipoprotein in this CDI) a signal is transmitted to activate secretion. The filament elongates slightly, the rest of CdiA is secreted and the FHA-2 domain becomes stably associated with the target cell's outer membrane where it facilitates entry of the toxic CT domain into the target cell periplasm. From there the toxic CT domain is cleaved and gains access to the target cell cytoplasm via an inner membrane protein (probably inner membrane protein BTH_II0599). This is tRNA nuclease CdiA-2 (cdiA2) from Burkholderia pseudomallei (strain 1026b).